Here is a 766-residue protein sequence, read N- to C-terminus: Hypoxia-inducible factor 1-alpha (766 aa).

Residues 1–26 are disordered; the sequence is MDTGVVPEKKSRVSSDRRKEKSRDAA. Residues 7–26 show a composition bias toward basic and acidic residues; that stretch reads PEKKSRVSSDRRKEKSRDAA. In terms of domain architecture, bHLH spans 17–70; it reads RRKEKSRDAARCRRGKESEVFYELAQELPLPHSVTSNLDKASIMRLAISYLHMR. PAS domains follow at residues 82–159 and 230–300; these read EERE…TSKK and PHPS…FAKG. Positions 304 to 347 constitute a PAC domain; that stretch reads TGQYRMLAKRGGFVWVETQATVIYNNKNSQPQCVVCVNYVLSGI. The tract at residues 361 to 383 is disordered; that stretch reads DMRPVKKELEEEESSEPEVSPVL. Pro426 is modified (4-hydroxyproline). Residues 475–509 form a disordered region; it reads DQHLVPNTSVDTTEVSTGPDSSSTPGSHSFTEPDS. Over residues 479 to 489 the composition is skewed to polar residues; it reads VPNTSVDTTEV. Residues 490-503 show a composition bias toward low complexity; sequence STGPDSSSTPGSHS. Residue Pro559 is modified to 4-hydroxyproline. A Nuclear localization signal motif is present at residues 718–721; the sequence is LLGI. A (3S)-3-hydroxyasparagine modification is found at Asn743.

As to quaternary structure, efficient DNA binding requires heterodimerization of an alpha and a beta/ARNT subunit. Post-translationally, in normoxia, is hydroxylated on Pro-426 and Pro-559. The hydroxylated prolines promote interaction with VHL, initiating rapid ubiquitination and subsequent proteasomal degradation. Under hypoxia, proline hydroxylation is impaired and ubiquitination is attenuated, resulting in stabilization. In terms of processing, in normoxia, is hydroxylated on Asn-743, thus abrogating interaction with CREBBP and EP300 and preventing transcriptional activation. The iron and 2-oxoglutarate dependent 3-hydroxylation of asparagine is (S) stereospecific within HIF CTAD domains.

The protein localises to the cytoplasm. The protein resides in the nucleus. It is found in the nucleus speckle. With respect to regulation, induced by reactive oxygen species (ROS). Its function is as follows. Functions as a master transcriptional regulator of the adaptive response to hypoxia. Under hypoxic conditions, activates the transcription of over 40 genes, including erythropoietin, glucose transporters, glycolytic enzymes, vascular endothelial growth factor, HILPDA, and other genes whose protein products increase oxygen delivery or facilitate metabolic adaptation to hypoxia. Plays an essential role in embryonic vascularization, tumor angiogenesis and pathophysiology of ischemic disease. The protein is Hypoxia-inducible factor 1-alpha (hif1a) of Oncorhynchus mykiss (Rainbow trout).